We begin with the raw amino-acid sequence, 228 residues long: UPF0173 metal-dependent hydrolase BLi03080/BL00413 (228 aa).

The protein belongs to the UPF0173 family.

The protein is UPF0173 metal-dependent hydrolase BLi03080/BL00413 of Bacillus licheniformis (strain ATCC 14580 / DSM 13 / JCM 2505 / CCUG 7422 / NBRC 12200 / NCIMB 9375 / NCTC 10341 / NRRL NRS-1264 / Gibson 46).